Here is a 122-residue protein sequence, read N- to C-terminus: Large ribosomal subunit protein bL12 (122 aa).

This sequence belongs to the bacterial ribosomal protein bL12 family. In terms of assembly, homodimer. Part of the ribosomal stalk of the 50S ribosomal subunit. Forms a multimeric L10(L12)X complex, where L10 forms an elongated spine to which 2 to 4 L12 dimers bind in a sequential fashion. Binds GTP-bound translation factors.

Its function is as follows. Forms part of the ribosomal stalk which helps the ribosome interact with GTP-bound translation factors. Is thus essential for accurate translation. This Cronobacter sakazakii (strain ATCC BAA-894) (Enterobacter sakazakii) protein is Large ribosomal subunit protein bL12.